Here is a 192-residue protein sequence, read N- to C-terminus: Protein Syd (192 aa).

This sequence belongs to the Syd family.

It is found in the cell inner membrane. In terms of biological role, interacts with the SecY protein in vivo. May bind preferentially to an uncomplexed state of SecY, thus functioning either as a chelating agent for excess SecY in the cell or as a regulatory factor that negatively controls the translocase function. The protein is Protein Syd of Hahella chejuensis (strain KCTC 2396).